Here is a 154-residue protein sequence, read N- to C-terminus: Endoribonuclease YbeY (154 aa).

His120, His124, and His130 together coordinate Zn(2+).

This sequence belongs to the endoribonuclease YbeY family. Requires Zn(2+) as cofactor.

The protein localises to the cytoplasm. Functionally, single strand-specific metallo-endoribonuclease involved in late-stage 70S ribosome quality control and in maturation of the 3' terminus of the 16S rRNA. The polypeptide is Endoribonuclease YbeY (Leptospira biflexa serovar Patoc (strain Patoc 1 / Ames)).